The sequence spans 960 residues: Gamma-aminobutyric acid type B receptor subunit 1 (960 aa).

The signal sequence occupies residues 1-19 (MLLLLLVPLFLRPLGAGGA). Residues 20–590 (QTPNVTSEGC…KTFRFLSQKL (571 aa)) are Extracellular-facing. Asn-23 and Asn-83 each carry an N-linked (GlcNAc...) asparagine glycan. Sushi domains follow at residues 29-95 (CQII…PSRC) and 97-158 (RICS…HCQV). Disulfide bonds link Cys-99–Cys-144, Cys-130–Cys-156, and Cys-219–Cys-245. The 4-aminobutanoate site is built by Ser-246, Ser-269, His-286, and Tyr-366. An intrachain disulfide couples Cys-375 to Cys-409. N-linked (GlcNAc...) asparagine glycans are attached at residues Asn-408 and Asn-439. Position 465 (Glu-465) interacts with 4-aminobutanoate. N-linked (GlcNAc...) asparagine glycosylation is found at Asn-481, Asn-501, and Asn-513. Residues 591 to 611 (FISVSVLSSLGIVLAVVCLSF) form a helical membrane-spanning segment. The Cytoplasmic portion of the chain corresponds to 612-630 (NIYNSHVRYIQNSQPNLNN). A helical membrane pass occupies residues 631-651 (LTAVGCSLALAAVFPLGLDGY). Over 652-666 (HIGRSQFPFVCQARL) the chain is Extracellular. Residues 667 to 687 (WLLGLGFSLGYGSMFTKIWWV) traverse the membrane as a helical segment. Residues 688–709 (HTVFTKKEEKKEWRKTLEPWKL) are Cytoplasmic-facing. Residues 710–730 (YATVGLLVGMDILTLAIWQIV) traverse the membrane as a helical segment. Residues 731–767 (DPLHRTIETFAKEEPKEDIDVSILPQLEHCSSKKMNT) are Extracellular-facing. A helical transmembrane segment spans residues 768–788 (WLGIFYGYKGLLLLLGIFLAY). The Cytoplasmic segment spans residues 789 to 803 (ETKSVSTEKINDHRA). The chain crosses the membrane as a helical span at residues 804-824 (VGMAIYNVAVLCLITAPVTMI). Over 825–832 (LSSQQDAA) the chain is Extracellular. The chain crosses the membrane as a helical span at residues 833–853 (FAFASLAIVFSSYITLVVLFV). At 854 to 960 (PKMRRLITRG…DGSRVHLLYK (107 aa)) the chain is on the cytoplasmic side. 2 disordered regions span residues 866-891 (QSEA…RLLE) and 908-960 (VSEL…LLYK). Over residues 867–879 (SEAQDTMKTGSST) the composition is skewed to polar residues. A coiled-coil region spans residues 868–924 (EAQDTMKTGSSTNNNEEEKSRLLEKENRELEKIIAEKEERVSELRHQLQSRQQIRSR). Thr-872 bears the Phosphothreonine mark. The interaction with ATF4 stretch occupies residues 887–915 (SRLLEKENRELEKIIAEKEERVSELRHQL). Thr-929 carries the post-translational modification Phosphothreonine.

It belongs to the G-protein coupled receptor 3 family. GABA-B receptor subfamily. As to quaternary structure, heterodimer of GABBR1 and GABBR2. Homodimers may form, but are inactive. Interacts (via C-terminus) with ATF4 (via leucine zipper domain). Interacts with JAKMIP1. Interacts with KCTD8, KCTD12, KCTD12B and KCTD16; this interaction determines the pharmacology and kinetics of the receptor response, the KCTD proteins markedly accelerating the GABA-B response, although to different extents. In terms of tissue distribution, expressed in neuronal tissue including cortex, cerebellum and spinal cord. Not detected in non-neuronal tissues including heart, liver, spleen and kidney.

The protein resides in the cell membrane. It localises to the postsynaptic cell membrane. The protein localises to the cell projection. It is found in the dendrite. Functionally, component of a heterodimeric G-protein coupled receptor for GABA, formed by GABBR1 and GABBR2. Within the heterodimeric GABA receptor, only GABBR1 seems to bind agonists, while GABBR2 mediates coupling to G proteins. Ligand binding causes a conformation change that triggers signaling via guanine nucleotide-binding proteins (G proteins) and modulates the activity of down-stream effectors, such as adenylate cyclase. Signaling inhibits adenylate cyclase, stimulates phospholipase A2, activates potassium channels, inactivates voltage-dependent calcium-channels and modulates inositol phospholipid hydrolysis. Calcium is required for high affinity binding to GABA. Plays a critical role in the fine-tuning of inhibitory synaptic transmission. Pre-synaptic GABA receptor inhibits neurotransmitter release by down-regulating high-voltage activated calcium channels, whereas postsynaptic GABA receptor decreases neuronal excitability by activating a prominent inwardly rectifying potassium (Kir) conductance that underlies the late inhibitory postsynaptic potentials. Not only implicated in synaptic inhibition but also in hippocampal long-term potentiation, slow wave sleep, muscle relaxation and antinociception. In Mus musculus (Mouse), this protein is Gamma-aminobutyric acid type B receptor subunit 1 (Gabbr1).